Here is a 124-residue protein sequence, read N- to C-terminus: Testis-expressed protein 54 (124 aa).

Basic and acidic residues predominate over residues 1-10 (MGCCQDKDFE). Disordered stretches follow at residues 1–77 (MGCC…SNES) and 90–124 (FGRR…PEKG). Acidic residues predominate over residues 11–30 (MSDEQSKEEESEDGREDETT). Composition is skewed to basic and acidic residues over residues 34 to 50 (RGPR…RGEL) and 101 to 124 (RQPD…PEKG).

Expressed in Testis.

In Homo sapiens (Human), this protein is Testis-expressed protein 54.